Consider the following 670-residue polypeptide: Small ribosomal subunit protein mS39 (670 aa).

Residues M1 to C13 constitute a mitochondrion transit peptide. PPR repeat units lie at residues V129–P163, S164–D199, R209–R239, N240–A274, D275–P314, N315–P351, S352–R392, D396–G430, Q438–P472, N473–N507, and S556–P590. The tract at residues I187–Y213 is disordered. Positions E193 to T203 are enriched in acidic residues. A disordered region spans residues E648–E670. A compositionally biased stretch (low complexity) spans S653–E670.

It belongs to the mitochondrion-specific ribosomal protein mS39 family.

The protein localises to the mitochondrion. In terms of biological role, mitochondrial protein that may have a role in mitochondrial translation. The polypeptide is Small ribosomal subunit protein mS39 (ptcd3) (Xenopus tropicalis (Western clawed frog)).